The chain runs to 1412 residues: DNA-directed RNA polymerase subunit beta' (1412 aa).

Residues cysteine 70, cysteine 72, cysteine 85, and cysteine 88 each contribute to the Zn(2+) site. Positions 460, 462, and 464 each coordinate Mg(2+). Cysteine 814, cysteine 888, cysteine 895, and cysteine 898 together coordinate Zn(2+). Residues 1378–1412 (EREAARQLANPFEDAPVTVDADAPQSDAGQEGSAE) form a disordered region.

The protein belongs to the RNA polymerase beta' chain family. In terms of assembly, the RNAP catalytic core consists of 2 alpha, 1 beta, 1 beta' and 1 omega subunit. When a sigma factor is associated with the core the holoenzyme is formed, which can initiate transcription. The cofactor is Mg(2+). Zn(2+) serves as cofactor.

It catalyses the reaction RNA(n) + a ribonucleoside 5'-triphosphate = RNA(n+1) + diphosphate. In terms of biological role, DNA-dependent RNA polymerase catalyzes the transcription of DNA into RNA using the four ribonucleoside triphosphates as substrates. This chain is DNA-directed RNA polymerase subunit beta', found in Bordetella petrii (strain ATCC BAA-461 / DSM 12804 / CCUG 43448).